The sequence spans 545 residues: Methionine--tRNA ligase (545 aa).

The 'HIGH' region signature appears at 13-23; it reads PYANGEIHLGH. The Zn(2+) site is built by C144, C147, C157, and C160. The short motif at 329-333 is the 'KMSKS' region element; the sequence is KMSKS. K332 lines the ATP pocket.

This sequence belongs to the class-I aminoacyl-tRNA synthetase family. MetG type 1 subfamily. In terms of assembly, monomer. Requires Zn(2+) as cofactor.

The protein localises to the cytoplasm. The enzyme catalyses tRNA(Met) + L-methionine + ATP = L-methionyl-tRNA(Met) + AMP + diphosphate. Functionally, is required not only for elongation of protein synthesis but also for the initiation of all mRNA translation through initiator tRNA(fMet) aminoacylation. This is Methionine--tRNA ligase from Vesicomyosocius okutanii subsp. Calyptogena okutanii (strain HA).